Reading from the N-terminus, the 34-residue chain is Photosystem II reaction center protein Psb30 (34 aa).

A helical transmembrane segment spans residues 6 to 26 (VIAQLVSLGVIVLVGPAVIIL).

It belongs to the Psb30/Ycf12 family. PSII is composed of 1 copy each of membrane proteins PsbA, PsbB, PsbC, PsbD, PsbE, PsbF, PsbH, PsbI, PsbJ, PsbK, PsbL, PsbM, PsbT, PsbX, PsbY, PsbZ, Psb30/Ycf12, peripheral proteins of the oxygen-evolving complex and a large number of cofactors. It forms dimeric complexes.

The protein resides in the plastid. It localises to the chloroplast thylakoid membrane. A core subunit of photosystem II (PSII), probably helps stabilize the reaction center. This is Photosystem II reaction center protein Psb30 from Pyropia yezoensis (Susabi-nori).